Consider the following 191-residue polypeptide: UPF0312 protein SO_3370 (191 aa).

Residues 1 to 22 (MKKQLFSALIGASLFAPMAVSA) form the signal peptide.

Belongs to the UPF0312 family. Type 1 subfamily.

It is found in the periplasm. This Shewanella oneidensis (strain ATCC 700550 / JCM 31522 / CIP 106686 / LMG 19005 / NCIMB 14063 / MR-1) protein is UPF0312 protein SO_3370.